The primary structure comprises 340 residues: Glyceraldehyde-3-phosphate dehydrogenase (340 aa).

NAD(+) contacts are provided by residues 11–12 (TI) and Gly-109. Position 138–140 (138–140 (SCN)) interacts with D-glyceraldehyde 3-phosphate. Cys-139 serves as the catalytic Nucleophile. Arg-167 contributes to the NAD(+) binding site. 193–194 (HA) contributes to the D-glyceraldehyde 3-phosphate binding site. An NAD(+)-binding site is contributed by Gln-300.

This sequence belongs to the glyceraldehyde-3-phosphate dehydrogenase family. In terms of assembly, homotetramer.

It localises to the cytoplasm. It carries out the reaction D-glyceraldehyde 3-phosphate + phosphate + NADP(+) = (2R)-3-phospho-glyceroyl phosphate + NADPH + H(+). The enzyme catalyses D-glyceraldehyde 3-phosphate + phosphate + NAD(+) = (2R)-3-phospho-glyceroyl phosphate + NADH + H(+). The protein operates within carbohydrate degradation; glycolysis; pyruvate from D-glyceraldehyde 3-phosphate: step 1/5. The chain is Glyceraldehyde-3-phosphate dehydrogenase from Saccharolobus islandicus (strain Y.N.15.51 / Yellowstone #2) (Sulfolobus islandicus).